A 547-amino-acid polypeptide reads, in one-letter code: MPDPTTLSAWAALAAHAPTLSDQPLRVLFDADPDRFARFHLRFEDLVLDYSKNRITGETMALLADLARQSGVEARRDAMFAGEPINTTEGRAVLHVALRDPTPTPVLVDGADVKPAIAAVLAHMEAFSEAVRSGAWTGATGKAITDVVNIGIGGSDLGPVMVVEALKAYAKPGLRVHFVSNVDGTHIAETLKGLSPETTLFLVASKTFTTQETLTNAHTARDWLVGALGEPAVARHFAALSTNAKAVSAFGIDTANMFEFWDWVGGRYSLWSAIGLPIAISVGFANFRALLDGAHAMDTHFREAPIERNLPVILGLLGVWYGDFLGARAQAVLPYDQYLHRLAAYLQQADMESNGKRTTLDGKTVAYATGAVLFGEPGTNGQHSFYQLIHQGTSLIPCDFIAPAISHNPLGRHHAILLSNFLAQTEALMRGKTEAEARAELAAQGLAGEALEALLPHKVFPGNRPTNAILVKRLDPRTLGMLIALYEHKIHVQATVWNINAYDQWGVELGKQLAKAILPELEDATISPAHDSSTNGLIALYREFSAG.

E352 acts as the Proton donor in catalysis. Active-site residues include H383 and K511.

Belongs to the GPI family.

Its subcellular location is the cytoplasm. It catalyses the reaction alpha-D-glucose 6-phosphate = beta-D-fructose 6-phosphate. It functions in the pathway carbohydrate biosynthesis; gluconeogenesis. Its pathway is carbohydrate degradation; glycolysis; D-glyceraldehyde 3-phosphate and glycerone phosphate from D-glucose: step 2/4. Its function is as follows. Catalyzes the reversible isomerization of glucose-6-phosphate to fructose-6-phosphate. This chain is Glucose-6-phosphate isomerase, found in Rhodospirillum rubrum (strain ATCC 11170 / ATH 1.1.1 / DSM 467 / LMG 4362 / NCIMB 8255 / S1).